We begin with the raw amino-acid sequence, 3011 residues long: Chromodomain-helicase-DNA-binding protein 7 (3011 aa).

Disordered stretches follow at residues 90 to 146 (ISNA…SMWG), 159 to 189 (PYQQQQQQPQPTQPPQAPSGPPGQGHPQHMQ), 202 to 422 (MQQH…GSAG), 502 to 806 (QQLP…VEKI), and 941 to 960 (PEMERVERPPADDWKKSESS). Residues 159-168 (PYQQQQQQPQ) show a composition bias toward low complexity. Positions 169–179 (PTQPPQAPSGP) are enriched in pro residues. Low complexity predominate over residues 203–215 (QQHGQPQQQRMNQ). Polar residues-rich tracts occupy residues 216–227 (FSQGQEGLNQGN), 241–258 (VPQQNPSMAPSLRHSVQQ), 291–347 (QTLN…NQSV), and 374–393 (GSLNQMNTQTMHPSQPQGTY). Low complexity predominate over residues 502-516 (QQLPSQQQSFQQQMP). 2 stretches are compositionally biased toward polar residues: residues 576–586 (TQVSGPNTQLV) and 630–641 (DSQNLSRNSVDC). 2 stretches are compositionally biased toward basic and acidic residues: residues 655-684 (KKEPKDPKEPKEKKEPKTPKVPKTPKEPKE) and 718-730 (KGKEGSENSDLDK). Residues 747–759 (QKRRSSRQVKRKR) are compositionally biased toward basic residues. Residues 760-770 (YTEDLEFKISD) show a composition bias toward basic and acidic residues. The span at 783 to 795 (SPSNTSQSEQQES) shows a compositional bias: polar residues. Chromo domains are found at residues 801–868 (PVVE…GQNK) and 883–948 (VEID…RVER). A Helicase ATP-binding domain is found at 981–1155 (LFNWYNTRNC…FSLLHFLEPG (175 aa)). 994–1001 (DEMGLGKT) provides a ligand contact to ATP. The short motif at 1106 to 1109 (DEAH) is the DEAH box element. Positions 1295–1465 (LIDKLLPKLK…LSKKEIEDLL (171 aa)) constitute a Helicase C-terminal domain. Disordered regions lie at residues 1577–1602 (FSDLESDSEEKPSTKPRRPQDKSQGY), 1836–1869 (GTDMLADGGDGGEFDREDEDPEYKPTRTPFKDEI), and 2136–2291 (GTGN…GFYM). Over residues 1585–1597 (EEKPSTKPRRPQD) the composition is skewed to basic and acidic residues. The span at 1845–1856 (DGGEFDREDEDP) shows a compositional bias: acidic residues. Basic and acidic residues predominate over residues 1857–1867 (EYKPTRTPFKD). The span at 2136 to 2145 (GTGNANTVSS) shows a compositional bias: polar residues. Basic and acidic residues-rich tracts occupy residues 2166–2207 (QEEK…KQDC) and 2218–2238 (CELKDIEMSTDVDPKSISEKG). Residues 2239–2253 (SEEDEEEKLDDDDKS) are compositionally biased toward acidic residues. Positions 2403 to 2433 (RRRRRKIEIEAERAAKRRNLMEMVAQLRESQ) form a coiled coil. Ser2561 bears the Phosphoserine mark. Disordered stretches follow at residues 2825 to 2900 (TTGN…LPTN) and 2946 to 3011 (GSNE…ENDE). Positions 2841-2851 (GASKAEEKKNE) are enriched in basic and acidic residues. Polar residues predominate over residues 2864 to 2877 (DTVSATDSANGSVS). A compositionally biased stretch (low complexity) spans 2878 to 2893 (AATAATTATATTTTTT). Basic and acidic residues predominate over residues 2948-2964 (NEEKATDKTEGTAFKDE). 2 stretches are compositionally biased toward acidic residues: residues 2965-2974 (ENLEGSDAEE) and 2984-3011 (ILEDEIAQGEELDSLDGGEEIENNENDE).

The protein belongs to the SNF2/RAD54 helicase family. Expressed in the neural epithelium, otic placodes, optic placodes, branchial arches, and the olfactory placodes,.

Its subcellular location is the nucleus. It carries out the reaction ATP + H2O = ADP + phosphate + H(+). ATP-dependent chromatin-remodeling factor, slides nucleosomes along DNA; nucleosome sliding requires ATP.Probable transcription regulator. Maybe involved in the in 45S precursor rRNA production. This chain is Chromodomain-helicase-DNA-binding protein 7 (CHD7), found in Gallus gallus (Chicken).